Reading from the N-terminus, the 318-residue chain is Ribosomal RNA small subunit methyltransferase H (318 aa).

S-adenosyl-L-methionine is bound by residues 33–35 (GGH), D53, F80, D101, and Q108.

This sequence belongs to the methyltransferase superfamily. RsmH family.

It is found in the cytoplasm. The catalysed reaction is cytidine(1402) in 16S rRNA + S-adenosyl-L-methionine = N(4)-methylcytidine(1402) in 16S rRNA + S-adenosyl-L-homocysteine + H(+). Its function is as follows. Specifically methylates the N4 position of cytidine in position 1402 (C1402) of 16S rRNA. The sequence is that of Ribosomal RNA small subunit methyltransferase H from Symbiobacterium thermophilum (strain DSM 24528 / JCM 14929 / IAM 14863 / T).